The chain runs to 943 residues: MPSTSFPVPSKFPLGPAAAVFGRGETLGPAPRAGGTMKSAEEEHYGYASSNVSPALPLPTAHSTLPAPCHNLQTSTPGIIPPADHPSGYGAALDGGPAGYFLSSGHTRPDGAPALESPRIEITSCLGLYHNNNQFFHDVEVEDVLPSSKRSPSTATLSLPSLEAYRDPSCLSPASSLSSRSCNSEASSYESNYSYPYASPQTSPWQSPCVSPKTTDPEEGFPRGLGACTLLGSPRHSPSTSPRASVTEESWLGARSSRPASPCNKRKYSLNGRQPPYSPHHSPTPSPHGSPRVSVTDDSWLGNTTQYTSSAIVAAINALTTDSSLDLGDGVPVKSRKTTLEQPPSVALKVEPVGEDLGSPPPPADFAPEDYSSFQHIRKGGFCDQYLAVPQHPYQWAKPKPLSPTSYMSPTLPALDWQLPSHSGPYELRIEVQPKSHHRAHYETEGSRGAVKASAGGHPIVQLHGYLENEPLMLQLFIGTADDRLLRPHAFYQVHRITGKTVSTTSHEAILSNTKVLEIPLLPENSMRAVIDCAGILKLRNSDIELRKGETDIGRKNTRVRLVFRVHVPQPSGRTLSLQVASNPIECSQRSAQELPLVEKQSTDSYPVVGGKKMVLSGHNFLQDSKVIFVEKAPDGHHVWEMEAKTDRDLCKPNSLVVEIPPFRNQRITSPVHVSFYVCNGKRKRSQYQRFTYLPANVPIIKTEPTDDYEPAPTCGPVSQGLSPLPRPYYSQQLAMPPDPSSCLVAGFPPCPQRSTLMPAAPGVSPKLHDLSPAAYTKGVASPGHCHLGLPQPAGEAPAVQDVPRPVATHPGSPGQPPPALLPQQVSAPPSSSCPPGLEHSLCPSSPSPPLPPATQEPTCLQPCSPACPPATGRPQHLPSTVRRDESPTAGPRLLPEVHEDGSPNLAPIPVTVKREPEELDQLYLDDVNEIIRNDLSSTSTHS.

A disordered region spans residues 22 to 48 (GRGETLGPAPRAGGTMKSAEEEHYGYA). The tract at residues 118–123 (PRIEIT) is calcineurin-binding. A transactivation domain A (TAD-A) region spans residues 126 to 218 (LGLYHNNNQF…CVSPKTTDPE (93 aa)). The interval 200 to 298 (PQTSPWQSPC…GSPRVSVTDD (99 aa)) is disordered. Positions 201-214 (QTSPWQSPCVSPKT) are enriched in polar residues. 2 repeat units span residues 203 to 219 (SPWQ…DPEE) and 233 to 249 (SPRH…VTEE). Residues 203–298 (SPWQSPCVSP…GSPRVSVTDD (96 aa)) form a 3 X SP repeats region. Phosphoserine is present on residues Ser233 and Ser237. The span at 236-248 (HSPSTSPRASVTE) shows a compositional bias: polar residues. Ser245 carries the post-translational modification Phosphoserine; by PKA. The Nuclear localization signal motif lies at 265 to 267 (KRK). A Phosphoserine; by PKA modification is found at Ser269. A compositionally biased stretch (pro residues) spans 276–288 (PYSPHHSPTPSPH). Repeat 3 spans residues 282-298 (SPTPSPHGSPRVSVTDD). Ser294 is subject to Phosphoserine; by PKA. The Nuclear export signal motif lies at 310–321 (SAIVAAINALTT). One can recognise an RHD domain in the interval 410–592 (PTLPALDWQL…NPIECSQRSA (183 aa)). The DNA-binding element occupies 439-446 (RAHYETEG). Positions 682 to 684 (KRK) match the Nuclear localization signal motif. A transactivation domain B (TAD-B) region spans residues 703–943 (TEPTDDYEPA…NDLSSTSTHS (241 aa)). The disordered stretch occupies residues 787 to 912 (HLGLPQPAGE…SPNLAPIPVT (126 aa)). Positions 846–855 (SPSPPLPPAT) are enriched in pro residues. The Nuclear export signal signature appears at 924-933 (YLDDVNEIIR).

Member of the multicomponent NFATC transcription complex that consists of at least two components, a pre-existing cytoplasmic component NFATC2 and an inducible nuclear component NFATC1. Other members such as NFATC4, NFATC3 or members of the activating protein-1 family, MAF, GATA4 and Cbp/p300 can also bind the complex. NFATC proteins bind to DNA as monomers. Interacts with HOMER2 and HOMER3; this interaction may compete with calcineurin/PPP3CA-binding and hence prevent NFATC1 dephosphorylation and activation. Interacts with TLE6/GRG6. Post-translationally, phosphorylated by NFATC-kinase and GSK3B; phosphorylation induces NFATC1 nuclear exit and dephosphorylation by calcineurin promotes nuclear import. Phosphorylation by PKA and DYRK2 negatively modulates nuclear accumulation, and promotes subsequent phosphorylation by GSK3B or casein kinase 1. As to expression, expressed in thymus, peripheral leukocytes as T-cells and spleen. Isoforms A are preferentially expressed in effector T-cells (thymus and peripheral leukocytes) whereas isoforms B and isoforms C are preferentially expressed in naive T-cells (spleen). Isoforms B are expressed in naive T-cells after first antigen exposure and isoforms A are expressed in effector T-cells after second antigen exposure. Isoforms IA are widely expressed but not detected in liver nor pancreas, neural expression is strongest in corpus callosum. Isoforms IB are expressed mostly in muscle, cerebellum, placenta and thymus, neural expression in fetal and adult brain, strongest in corpus callosum.

It localises to the cytoplasm. Its subcellular location is the nucleus. In terms of biological role, plays a role in the inducible expression of cytokine genes in T-cells, especially in the induction of the IL-2 or IL-4 gene transcription. Also controls gene expression in embryonic cardiac cells. Could regulate not only the activation and proliferation but also the differentiation and programmed death of T-lymphocytes as well as lymphoid and non-lymphoid cells. Required for osteoclastogenesis and regulates many genes important for osteoclast differentiation and function. In Homo sapiens (Human), this protein is Nuclear factor of activated T-cells, cytoplasmic 1 (NFATC1).